The sequence spans 1714 residues: Bifunctional glutamate/proline--tRNA ligase (1714 aa).

The tract at residues 166-191 (DAKVKRSPQSSKEQTPAKTGERKQEG) is disordered. The interval 170 to 754 (KRSPQSSKEQ…ASELDSQISQ (585 aa)) is glutamate--tRNA ligase. Over residues 172–182 (SPQSSKEQTPA) the composition is skewed to polar residues. Positions 209-220 (PPEASGYLHIGH) match the 'HIGH' region motif. The 'KMSKS' region signature appears at 438–442 (VLSKR). Disordered stretches follow at residues 718–754 (PTSG…QISQ), 791–817 (GKDW…ANDA), and 943–962 (GTTA…EKNP). 2 stretches are compositionally biased toward low complexity: residues 734–746 (KASS…GQAS) and 800–817 (SASS…ANDA). WHEP-TRS domains follow at residues 744–800 (QASE…GQTS), 816–872 (DAVS…GTVP), 890–946 (SVAQ…GTTA), 969–1025 (TVNT…GTVA), and 1044–1100 (DVGS…DAKS). The 6 X 57 AA approximate repeats stretch occupies residues 755–1201 (QGDLVRDLKS…KPAKPVKKEP (447 aa)). Disordered regions lie at residues 1093-1119 (DWTP…SPAK) and 1168-1210 (FPVA…GAVK). Residues 1094–1109 (WTPDAKSEPAVVKKEA) show a composition bias toward basic and acidic residues. Residue Ser-1110 is modified to Phosphoserine. One can recognise a WHEP-TRS 6 domain in the interval 1118-1174 (AKDELTQEINAQGEKVRAAKGNKAAKEVIDAEVAKLLALKAKYKEVTGTDFPVAGRG). Gly residues predominate over residues 1172 to 1181 (GRGGGGGGGS). Residues 1207–1714 (GAVKKQTRLG…KFYTLFGRSY (508 aa)) form a proline--tRNA ligase region. Residues 1322 to 1324 (TSE) and Arg-1353 each bind L-proline. Positions 1353, 1355, 1364, 1365, 1438, and 1441 each coordinate ATP. Gln-1438 is a binding site for Mg(2+). His-1443 contacts L-proline. Residues Thr-1476 and Arg-1478 each coordinate ATP. Residues Cys-1648, Cys-1653, and Cys-1695 each coordinate Zn(2+).

This sequence in the N-terminal section; belongs to the class-I aminoacyl-tRNA synthetase family. Glutamate--tRNA ligase type 2 subfamily. It in the C-terminal section; belongs to the class-II aminoacyl-tRNA synthetase family. As to quaternary structure, component of the multisynthetase complex which is comprised of a bifunctional glutamyl-prolyl-tRNA synthetase, the monospecific isoleucyl, leucyl, glutaminyl, methionyl, lysyl, arginyl, and aspartyl-tRNA synthetases as well as three auxiliary proteins, p18, p48 and p43.

The catalysed reaction is tRNA(Glu) + L-glutamate + ATP = L-glutamyl-tRNA(Glu) + AMP + diphosphate. It catalyses the reaction tRNA(Pro) + L-proline + ATP = L-prolyl-tRNA(Pro) + AMP + diphosphate. Its function is as follows. Catalyzes the attachment of both L-glutamate and L-proline to their cognate tRNAs in a two-step reaction where the amino acid is first activated by ATP to form a covalent intermediate with AMP. Subsequently, the activated amino acid is transferred to the acceptor end of the cognate tRNA to form L-glutamyl-tRNA(Glu) and L-prolyl-tRNA(Pro). This is Bifunctional glutamate/proline--tRNA ligase from Drosophila melanogaster (Fruit fly).